A 245-amino-acid chain; its full sequence is MYPVDLHMHTVASTHAYSTLHDYIAQARLKGIKLFAITDHGPDMADAPHYWHFVNMRIWPRLVDGVGILRGIEANIKNTDGEIDCTGPMLTSLDMIIAGFHEPVFPPQDKDTHTQAMIATIASGNVHIISHPGNPKFPIDIQAVAQAAAKHRVALEINNSSFTHSRMGSEANCRAVAAAVRDAGGMVALGSDSHTAFTLGEFTECRKVLDEVGFPEERILNVTPRRMLDFLESLGMPHIPEFADL.

9 residues coordinate Zn(2+): H7, H9, H15, H40, E73, H101, H131, D192, and H194.

Belongs to the PHP family. As to quaternary structure, homotrimer. Zn(2+) serves as cofactor.

This is Probable phosphatase Ent638_1550 from Enterobacter sp. (strain 638).